The primary structure comprises 328 residues: Probable membrane-associated kinase regulator 4 (328 aa).

A disordered region spans residues 213-253; that stretch reads GQIKTERPKKQSNGSVSGSHRRSFSVSMRRQAAKSSNNKSS. Over residues 223-240 the composition is skewed to polar residues; sequence QSNGSVSGSHRRSFSVSM.

The protein resides in the cell membrane. This is Probable membrane-associated kinase regulator 4 (MAKR4) from Arabidopsis thaliana (Mouse-ear cress).